We begin with the raw amino-acid sequence, 220 residues long: Response regulator protein TmoT (220 aa).

Positions 21-135 (VIYIVDDDNA…DLLGAIRTAL (115 aa)) constitute a Response regulatory domain. D70 is subject to 4-aspartylphosphate. The region spanning 151–216 (LKASYESLSK…DLVRVTERLK (66 aa)) is the HTH luxR-type domain. Positions 175–194 (NKQTALELDISEATVKVHRH) form a DNA-binding region, H-T-H motif.

Post-translationally, phosphorylated by TmoS.

It localises to the cytoplasm. In terms of biological role, member of the two-component regulatory system TmoS/TmoT involved in the regulation of toluene degradation. Induces expression of tmoX operon. This Ectopseudomonas mendocina (Pseudomonas mendocina) protein is Response regulator protein TmoT (tmoT).